The following is a 231-amino-acid chain: Enolase-phosphatase E1 (231 aa).

Aspartate 11 and glutamate 13 together coordinate Mg(2+). Substrate is bound by residues 125–126 (SS) and lysine 162. Residue aspartate 188 participates in Mg(2+) binding.

It belongs to the HAD-like hydrolase superfamily. MasA/MtnC family. Monomer. Requires Mg(2+) as cofactor.

Its subcellular location is the cytoplasm. It localises to the nucleus. The enzyme catalyses 5-methylsulfanyl-2,3-dioxopentyl phosphate + H2O = 1,2-dihydroxy-5-(methylsulfanyl)pent-1-en-3-one + phosphate. It participates in amino-acid biosynthesis; L-methionine biosynthesis via salvage pathway; L-methionine from S-methyl-5-thio-alpha-D-ribose 1-phosphate: step 3/6. It functions in the pathway amino-acid biosynthesis; L-methionine biosynthesis via salvage pathway; L-methionine from S-methyl-5-thio-alpha-D-ribose 1-phosphate: step 4/6. Functionally, bifunctional enzyme that catalyzes the enolization of 2,3-diketo-5-methylthiopentyl-1-phosphate (DK-MTP-1-P) into the intermediate 2-hydroxy-3-keto-5-methylthiopentenyl-1-phosphate (HK-MTPenyl-1-P), which is then dephosphorylated to form the acireductone 1,2-dihydroxy-3-keto-5-methylthiopentene (DHK-MTPene). The chain is Enolase-phosphatase E1 from Pyricularia oryzae (strain 70-15 / ATCC MYA-4617 / FGSC 8958) (Rice blast fungus).